Here is a 101-residue protein sequence, read N- to C-terminus: Protamine-3 (101 aa).

The tract at residues 1 to 101 (MGSRCAKLST…PSPEPKQTHS (101 aa)) is disordered. The segment covering 45–67 (EGEEEEEDEEEEEEEEEEEEEEQ) has biased composition (acidic residues). Residue Ser-93 is modified to Phosphoserine.

It belongs to the protamine P3 family. As to expression, testis.

The protein resides in the nucleus. The protein localises to the chromosome. Protamines substitute for histones in the chromatin of sperm during the haploid phase of spermatogenesis. They compact sperm DNA into a highly condensed, stable and inactive complex. The sequence is that of Protamine-3 (Prm3) from Mus musculus (Mouse).